The sequence spans 90 residues: Small ribosomal subunit protein uS15c (90 aa).

Belongs to the universal ribosomal protein uS15 family. As to quaternary structure, part of the 30S ribosomal subunit.

It is found in the plastid. It localises to the chloroplast. In Ipomoea purpurea (Common morning glory), this protein is Small ribosomal subunit protein uS15c (rps15-A).